The sequence spans 115 residues: LSM complex subunit LSM7 (115 aa).

Basic and acidic residues predominate over residues 1-10 (MHQQHSKSEN). The disordered stretch occupies residues 1–23 (MHQQHSKSENKPQQQRKKFEGPK). In terms of domain architecture, Sm spans 25-108 (EAILDLAKYK…LVSLSSAEGS (84 aa)).

It belongs to the snRNP Sm proteins family. As to quaternary structure, component of the heptameric LSM1-LSM7 complex that forms a seven-membered ring structure with a donut shape. The LSm subunits are arranged in the order LSM1, LSM2, LSM3, LSM6, LSM5, LSM7 and LSM4. Except for LSM1, where a C-terminal helix crosses the ring structure to form additional interactions with LSM3 and LSM6, each subunit interacts only with its two neighboring subunits. The LSM1-LSM7 complex interacts with PAT1; within the complex PAT1 has direct interactions with LSM2 and LSM3. The LSM1-LSM7 complex interacts with XRN1. Component of the heptameric LSM2-LSM8 complex that forms a seven-membered ring structure with a donut shape; an RNA strand can pass through the hole in the center of the ring structure. The LSm subunits are arranged in the order LSM8, LSM2, LSM3, LSM6, LSM5, LSM7 and LSM4. Component of the spliceosome U4/U6-U5 tri-snRNP complex composed of the U4, U6 and U5 snRNAs and at least PRP3, PRP4, PRP6, PRP8, PRP18, PRP31, PRP38, SNU13, SNU23, SNU66, SNU114, SPP381, SMB1, SMD1, SMD2, SMD3, SMX2, SMX3, LSM2, LSM3, LSM4, LSM5, LSM6, LSM7, LSM8, BRR2 and DIB1. May be found in a complex comprising LSM2-LSM7 without LSM1 or LSM8; the complex associates with pre-P RNA and snoRNA SNR5.

It localises to the nucleus. The protein localises to the nucleolus. It is found in the cytoplasm. In terms of biological role, component of LSm protein complexes, which are involved in RNA processing and may function in a chaperone-like manner. Component of the cytoplasmic LSM1-LSM7 complex which is involved in mRNA degradation by activating the decapping step. Together with PAT1, the LSM1-LSM7 complex binds to osmotic stress-activated mRNAs to attenuate the osmotic stress response, probably by limiting ribosome access to the mRNA and consequently translation. Component of the nuclear LSM2-LSM8 complex, which is involved in spliceosome assembly. The LSM2-LSM8 complex plays a role in the biogenesis of the spliceosomal U4/U6-U5 tri-snRNP complex by accelerating PRP24-mediated annealing of U4/U6 di-snRNA. The LSM2-LSM8 complex binds U6 snRNA terminating with a non-cyclic 3' phosphate group. LSM2-LSM8 is probably also involved in degradation of nuclear pre-mRNA by targeting them for decapping. LSM2-LSM8 could be involved in processing of pre-tRNAs, pre-rRNAs and U3 snoRNA, although involvement may be indirect. In a complex that probably contains LSM2-LSM7, but not LSM1 or LSM8, associates with the precursor of the RNA component of RNase P (pre-P RNA) and may be involved in maturing pre-P RNA; the complex also associates with snoRNA SNR5. In Saccharomyces cerevisiae (strain ATCC 204508 / S288c) (Baker's yeast), this protein is LSM complex subunit LSM7 (LSM7).